Consider the following 369-residue polypeptide: 3-methylarginine biosynthesis aminotransferase ArgM (369 aa).

Residue Lys-216 is modified to N6-(pyridoxal phosphate)lysine.

This sequence belongs to the class-I pyridoxal-phosphate-dependent aminotransferase family. Requires pyridoxal 5'-phosphate as cofactor.

It catalyses the reaction L-arginine + 2-oxoglutarate = 5-guanidino-2-oxopentanoate + L-glutamate. It carries out the reaction (3R)-5-guanidino-3-methyl-2-oxopentanoate + L-aspartate = (3R)-3-methyl-L-arginine + oxaloacetate. It functions in the pathway antibiotic biosynthesis. Functionally, aminotransferase involved in the formation of the rare amino acid 3-methylarginine (MeArg), which is incorporated into the peptidyl nucleoside antibiotic arginomycin. Catalyzes two rounds of transamination: the transfer of the amino group from L-arginine to 2-oxoglutarate to give glutamate and 5-guanidino-2-oxopentanoic acid, which will be methylated by ArgN. Then, ArgM specifically catalyzes transamination from the donor L-aspartate to the 5-guanidino-3-methyl-2-oxopentanoic acid produced by ArgN, generating the final product, 3-methylarginine. Cannot use arginine analogs, such as D-arginine, L-homoarginine and N-methylarginine for the first transamination. This Streptomyces arginensis protein is 3-methylarginine biosynthesis aminotransferase ArgM.